The primary structure comprises 258 residues: Type III pantothenate kinase 1 (258 aa).

6–13 lines the ATP pocket; the sequence is DMGNSHIH. Residue 107-110 participates in substrate binding; that stretch reads GADR. The active-site Proton acceptor is aspartate 109. K(+) is bound at residue aspartate 130. Threonine 133 lines the ATP pocket. Substrate is bound at residue threonine 185.

The protein belongs to the type III pantothenate kinase family. In terms of assembly, homodimer. NH4(+) is required as a cofactor. Requires K(+) as cofactor.

The protein resides in the cytoplasm. The enzyme catalyses (R)-pantothenate + ATP = (R)-4'-phosphopantothenate + ADP + H(+). The protein operates within cofactor biosynthesis; coenzyme A biosynthesis; CoA from (R)-pantothenate: step 1/5. Its function is as follows. Catalyzes the phosphorylation of pantothenate (Pan), the first step in CoA biosynthesis. This is Type III pantothenate kinase 1 from Francisella tularensis subsp. tularensis (strain FSC 198).